Reading from the N-terminus, the 402-residue chain is Phosphoglycerate kinase (402 aa).

Residues 24-26 (DFN), arginine 41, 64-67 (HMGR), arginine 123, and arginine 156 contribute to the substrate site. Residues lysine 207, glycine 298, glutamate 329, and 358–361 (GGDS) each bind ATP.

It belongs to the phosphoglycerate kinase family. As to quaternary structure, monomer.

It is found in the cytoplasm. The catalysed reaction is (2R)-3-phosphoglycerate + ATP = (2R)-3-phospho-glyceroyl phosphate + ADP. It participates in carbohydrate degradation; glycolysis; pyruvate from D-glyceraldehyde 3-phosphate: step 2/5. This is Phosphoglycerate kinase from Microcystis aeruginosa (strain NIES-843 / IAM M-2473).